Here is a 118-residue protein sequence, read N- to C-terminus: MTSYTFTRELRLLTPAQFKSVFSNPIKASSAEITLLAIPNSEQHPRLGLTVAKRYVKRANQRNRIKRIIRDSFRLNQHDIPHLDIVVLVRNGVMEMENAEINKLIEKLWRKLSRRYNG.

The protein belongs to the RnpA family. As to quaternary structure, consists of a catalytic RNA component (M1 or rnpB) and a protein subunit.

It carries out the reaction Endonucleolytic cleavage of RNA, removing 5'-extranucleotides from tRNA precursor.. In terms of biological role, RNaseP catalyzes the removal of the 5'-leader sequence from pre-tRNA to produce the mature 5'-terminus. It can also cleave other RNA substrates such as 4.5S RNA. The protein component plays an auxiliary but essential role in vivo by binding to the 5'-leader sequence and broadening the substrate specificity of the ribozyme. The sequence is that of Ribonuclease P protein component from Shewanella putrefaciens (strain CN-32 / ATCC BAA-453).